A 230-amino-acid chain; its full sequence is Ribonuclease 3 (230 aa).

In terms of domain architecture, RNase III spans 1-134 (MKQLEELLST…FLGALLLDKG (134 aa)). Glutamate 47 contacts Mg(2+). Residue aspartate 51 is part of the active site. Residues aspartate 120 and glutamate 123 each contribute to the Mg(2+) site. Residue glutamate 123 is part of the active site. One can recognise a DRBM domain in the interval 160 to 229 (DYKTCLQEFL…AKNALAQLSE (70 aa)).

The protein belongs to the ribonuclease III family. Homodimer. The cofactor is Mg(2+).

The protein resides in the cytoplasm. It carries out the reaction Endonucleolytic cleavage to 5'-phosphomonoester.. Functionally, digests double-stranded RNA. Involved in the processing of primary rRNA transcript to yield the immediate precursors to the large and small rRNAs (23S and 16S). Processes some mRNAs, and tRNAs when they are encoded in the rRNA operon. Processes pre-crRNA and tracrRNA of type II CRISPR loci if present in the organism. This chain is Ribonuclease 3, found in Streptococcus pyogenes serotype M2 (strain MGAS10270).